The following is a 419-amino-acid chain: Tyrosine--tRNA ligase (419 aa).

Tyr-42 is a binding site for L-tyrosine. The 'HIGH' region motif lies at 47–56; that stretch reads ATAPSLHVGS. Tyr-179 and Gln-183 together coordinate L-tyrosine. Positions 239–243 match the 'KMSKS' region motif; the sequence is KMGKT. ATP is bound at residue Lys-242. The S4 RNA-binding domain occupies 353–418; sequence IVLANLFADA…GKKKIVLVKP (66 aa).

The protein belongs to the class-I aminoacyl-tRNA synthetase family. TyrS type 1 subfamily. Homodimer.

It is found in the cytoplasm. It catalyses the reaction tRNA(Tyr) + L-tyrosine + ATP = L-tyrosyl-tRNA(Tyr) + AMP + diphosphate + H(+). Its function is as follows. Catalyzes the attachment of tyrosine to tRNA(Tyr) in a two-step reaction: tyrosine is first activated by ATP to form Tyr-AMP and then transferred to the acceptor end of tRNA(Tyr). This chain is Tyrosine--tRNA ligase, found in Caulobacter sp. (strain K31).